Here is a 157-residue protein sequence, read N- to C-terminus: Transmembrane protein 50A (157 aa).

S2 is subject to N-acetylserine. S2 carries the phosphoserine modification. The next 4 membrane-spanning stretches (helical) occupy residues 26–46 (IAAG…AVMY), 58–78 (TCGV…NGQV), 95–115 (IWLF…MWIL), and 126–146 (VVYP…GGLV).

This sequence belongs to the UPF0220 family.

The protein localises to the membrane. The protein is Transmembrane protein 50A (Tmem50a) of Mus musculus (Mouse).